A 567-amino-acid chain; its full sequence is Adenine deaminase 2 (567 aa).

Belongs to the metallo-dependent hydrolases superfamily. Adenine deaminase family. It depends on Mn(2+) as a cofactor.

The catalysed reaction is adenine + H2O + H(+) = hypoxanthine + NH4(+). The protein is Adenine deaminase 2 of Oenococcus oeni (strain ATCC BAA-331 / PSU-1).